The primary structure comprises 594 residues: UvrABC system protein C (594 aa).

Residues 13–99 (HSSGVYQYFD…IKQLKPKYNI (87 aa)) form the GIY-YIG domain. In terms of domain architecture, UVR spans 205–240 (DKLIKELELKMERLSNNLRFEEALIYRDRIAKIQKI).

The protein belongs to the UvrC family. Interacts with UvrB in an incision complex.

It localises to the cytoplasm. Functionally, the UvrABC repair system catalyzes the recognition and processing of DNA lesions. UvrC both incises the 5' and 3' sides of the lesion. The N-terminal half is responsible for the 3' incision and the C-terminal half is responsible for the 5' incision. This Helicobacter pylori (strain Shi470) protein is UvrABC system protein C.